A 147-amino-acid chain; its full sequence is MLGLGHDVVDVGAFAEQLEMPGTRMTRLFSARECRQASLRASIKHDGEALHLAAKWAAKESVVKAWCEALVGRGITERPYTVDDTPWSRIEIVDDATGCPRVVMAAEVHVELCRSLAVTESAEPVWHVSISHDGGIASAVAVLDMRE.

D7 and E60 together coordinate Mg(2+).

This sequence belongs to the P-Pant transferase superfamily. AcpS family. It depends on Mg(2+) as a cofactor.

The protein resides in the cytoplasm. The enzyme catalyses apo-[ACP] + CoA = holo-[ACP] + adenosine 3',5'-bisphosphate + H(+). Transfers the 4'-phosphopantetheine moiety from coenzyme A to a Ser of acyl-carrier-protein. In Bifidobacterium animalis subsp. lactis (strain AD011), this protein is Holo-[acyl-carrier-protein] synthase.